The following is a 313-amino-acid chain: Pseudouridine-5'-phosphate glycosidase (313 aa).

The Proton donor role is filled by E34. Residues K95 and V115 each coordinate substrate. D147 is a binding site for Mn(2+). Residue 149-151 (SAD) coordinates substrate. K168 functions as the Nucleophile in the catalytic mechanism.

The protein belongs to the pseudouridine-5'-phosphate glycosidase family. Homotrimer. Mn(2+) is required as a cofactor.

The catalysed reaction is D-ribose 5-phosphate + uracil = psi-UMP + H2O. In terms of biological role, catalyzes the reversible cleavage of pseudouridine 5'-phosphate (PsiMP) to ribose 5-phosphate and uracil. Functions biologically in the cleavage direction, as part of a pseudouridine degradation pathway. In Deinococcus radiodurans (strain ATCC 13939 / DSM 20539 / JCM 16871 / CCUG 27074 / LMG 4051 / NBRC 15346 / NCIMB 9279 / VKM B-1422 / R1), this protein is Pseudouridine-5'-phosphate glycosidase.